The chain runs to 432 residues: Glutamyl-tRNA reductase (432 aa).

Substrate-binding positions include 50-53 (TCNR), Ser-110, 115-117 (ETQ), and Gln-121. The active-site Nucleophile is the Cys-51. 190–195 (GVGEMS) is a binding site for NADP(+).

The protein belongs to the glutamyl-tRNA reductase family. Homodimer.

It carries out the reaction (S)-4-amino-5-oxopentanoate + tRNA(Glu) + NADP(+) = L-glutamyl-tRNA(Glu) + NADPH + H(+). The protein operates within porphyrin-containing compound metabolism; protoporphyrin-IX biosynthesis; 5-aminolevulinate from L-glutamyl-tRNA(Glu): step 1/2. Its function is as follows. Catalyzes the NADPH-dependent reduction of glutamyl-tRNA(Glu) to glutamate 1-semialdehyde (GSA). This Sulfurimonas denitrificans (strain ATCC 33889 / DSM 1251) (Thiomicrospira denitrificans (strain ATCC 33889 / DSM 1251)) protein is Glutamyl-tRNA reductase.